The following is a 56-amino-acid chain: Alpha-conotoxin EpI (56 aa).

Positions 1 to 16 (MFTVFLLVVLATTVVS) are cleaved as a signal peptide. Positions 17–39 (FTSDRASDSRKDAASGLIALTIK) are excised as a propeptide. 2 disulfides stabilise this stretch: cysteine 41–cysteine 47 and cysteine 42–cysteine 55. The interval 43-45 (SDP) is ser-Xaa-Pro motif, crucial for potent interaction with nAChR. Tyrosine 54 carries the sulfotyrosine modification. The residue at position 55 (cysteine 55) is a Cysteine amide.

The protein belongs to the conotoxin A superfamily. Post-translationally, both tyrosine sulfation and C-terminal amidation are important for activity and structure stability. As to expression, expressed by the venom duct.

It localises to the secreted. Functionally, alpha-conotoxins act on postsynaptic membranes, they bind to the nicotinic acetylcholine receptors (nAChR) and thus inhibit them. This native peptide blocks mammalian nicotinic acetylcholine receptors composed of alpha-3-beta-2/CHRNA3-CHRNB2 and alpha-3-beta-4/CHRNA3-CHRNB4 subunits. The polypeptide is Alpha-conotoxin EpI (Conus episcopatus (Bishop's cone)).